We begin with the raw amino-acid sequence, 350 residues long: Uroporphyrinogen decarboxylase (350 aa).

Substrate is bound by residues 27–31, phenylalanine 46, aspartate 76, tyrosine 152, serine 207, and histidine 321; that span reads RQAGR.

This sequence belongs to the uroporphyrinogen decarboxylase family. In terms of assembly, homodimer.

Its subcellular location is the cytoplasm. The catalysed reaction is uroporphyrinogen III + 4 H(+) = coproporphyrinogen III + 4 CO2. It functions in the pathway porphyrin-containing compound metabolism; protoporphyrin-IX biosynthesis; coproporphyrinogen-III from 5-aminolevulinate: step 4/4. Catalyzes the decarboxylation of four acetate groups of uroporphyrinogen-III to yield coproporphyrinogen-III. This chain is Uroporphyrinogen decarboxylase, found in Listeria monocytogenes serotype 4a (strain HCC23).